A 30-amino-acid polypeptide reads, in one-letter code: Photosystem I reaction center subunit XII (30 aa).

Residues 7 to 26 form a helical membrane-spanning segment; sequence IMVALFAALFTGILALRLGT.

It belongs to the PsaM family.

The protein resides in the plastid. The protein localises to the chloroplast thylakoid membrane. The polypeptide is Photosystem I reaction center subunit XII (Mesostigma viride (Green alga)).